The following is a 250-amino-acid chain: 2,3-bisphosphoglycerate-dependent phosphoglycerate mutase (250 aa).

Residues 8 to 15 (RHGESQWN), 21 to 22 (TG), arginine 60, 87 to 90 (ERHY), lysine 98, 114 to 115 (RR), and 183 to 184 (GN) contribute to the substrate site. Catalysis depends on histidine 9, which acts as the Tele-phosphohistidine intermediate. Glutamate 87 acts as the Proton donor/acceptor in catalysis.

This sequence belongs to the phosphoglycerate mutase family. BPG-dependent PGAM subfamily. As to quaternary structure, homodimer.

The enzyme catalyses (2R)-2-phosphoglycerate = (2R)-3-phosphoglycerate. It participates in carbohydrate degradation; glycolysis; pyruvate from D-glyceraldehyde 3-phosphate: step 3/5. In terms of biological role, catalyzes the interconversion of 2-phosphoglycerate and 3-phosphoglycerate. The sequence is that of 2,3-bisphosphoglycerate-dependent phosphoglycerate mutase from Bordetella petrii (strain ATCC BAA-461 / DSM 12804 / CCUG 43448).